We begin with the raw amino-acid sequence, 207 residues long: Large ribosomal subunit protein uL4 (207 aa).

The segment at 44 to 77 (RRQGTHDTKTRSEVRGGGRKPWRQKGTGRARHGT) is disordered. Basic and acidic residues predominate over residues 47-59 (GTHDTKTRSEVRG). The span at 60 to 77 (GGRKPWRQKGTGRARHGT) shows a compositional bias: basic residues.

This sequence belongs to the universal ribosomal protein uL4 family. As to quaternary structure, part of the 50S ribosomal subunit.

One of the primary rRNA binding proteins, this protein initially binds near the 5'-end of the 23S rRNA. It is important during the early stages of 50S assembly. It makes multiple contacts with different domains of the 23S rRNA in the assembled 50S subunit and ribosome. In terms of biological role, forms part of the polypeptide exit tunnel. The sequence is that of Large ribosomal subunit protein uL4 from Desulforudis audaxviator (strain MP104C).